Here is a 200-residue protein sequence, read N- to C-terminus: Holliday junction branch migration complex subunit RuvA (200 aa).

Positions 1–64 (MYAYFRGRLV…EDALQLYGFA (64 aa)) are domain I. Residues 65 to 143 (TEEEKQLFRL…KLAPVGSAVA (79 aa)) form a domain II region. The flexible linker stretch occupies residues 144–154 (SVAADRGGFRE). A domain III region spans residues 154–200 (EDAVNALMTLGFPRPVANQAVGCALEPEPDASLEVVIKRALATMHNR).

Belongs to the RuvA family. In terms of assembly, homotetramer. Forms an RuvA(8)-RuvB(12)-Holliday junction (HJ) complex. HJ DNA is sandwiched between 2 RuvA tetramers; dsDNA enters through RuvA and exits via RuvB. An RuvB hexamer assembles on each DNA strand where it exits the tetramer. Each RuvB hexamer is contacted by two RuvA subunits (via domain III) on 2 adjacent RuvB subunits; this complex drives branch migration. In the full resolvosome a probable DNA-RuvA(4)-RuvB(12)-RuvC(2) complex forms which resolves the HJ.

It is found in the cytoplasm. In terms of biological role, the RuvA-RuvB-RuvC complex processes Holliday junction (HJ) DNA during genetic recombination and DNA repair, while the RuvA-RuvB complex plays an important role in the rescue of blocked DNA replication forks via replication fork reversal (RFR). RuvA specifically binds to HJ cruciform DNA, conferring on it an open structure. The RuvB hexamer acts as an ATP-dependent pump, pulling dsDNA into and through the RuvAB complex. HJ branch migration allows RuvC to scan DNA until it finds its consensus sequence, where it cleaves and resolves the cruciform DNA. The protein is Holliday junction branch migration complex subunit RuvA of Chlorobium phaeovibrioides (strain DSM 265 / 1930) (Prosthecochloris vibrioformis (strain DSM 265)).